Reading from the N-terminus, the 250-residue chain is Neurotrophic factor BDNF precursor form (250 aa).

The N-terminal stretch at 1 to 18 (MTILFLTMVISYFGCMKA) is a signal peptide. Positions 19-131 (APMKEANLRA…AANMSMRVRR (113 aa)) are excised as a propeptide. 3 disulfides stabilise this stretch: Cys-144–Cys-211, Cys-189–Cys-240, and Cys-199–Cys-242.

It belongs to the NGF-beta family. Monomers and homodimers. Binds to NTRK2/TRKB. Can form heterodimers with other neurotrophin family members, such as NTF3 and NTF4 (in vitro), but the physiological relevance of this is not clear. BDNF precursor form: interacts with the heterodimer formed by NGFR and SORCS2. Mature BDNF has much lower affinity for the heterodimer formed by NGFR and SORCS2. Post-translationally, N-glycosylated and glycosulfated, contrary to mature BDNF. Mature BDNF is produced by proteolytic removal of the propeptide, catalyzed by a FURIN family member. In addition, the precursor form is proteolytically cleaved within the propeptide, but this is not an obligatory intermediate for the production of mature BDNF. Can be converted into mature BDNF by plasmin (PLG).

It localises to the secreted. Important signaling molecule that activates signaling cascades downstream of NTRK2. During development, promotes the survival and differentiation of selected neuronal populations of the peripheral and central nervous systems. Participates in axonal growth, pathfinding and in the modulation of dendritic growth and morphology. Major regulator of synaptic transmission and plasticity at adult synapses in many regions of the CNS. The versatility of BDNF is emphasized by its contribution to a range of adaptive neuronal responses including long-term potentiation (LTP), long-term depression (LTD), certain forms of short-term synaptic plasticity, as well as homeostatic regulation of intrinsic neuronal excitability. In terms of biological role, important signaling molecule that activates signaling cascades downstream of NTRK2. Activates signaling cascades via the heterodimeric receptor formed by NGFR and SORCS2. Signaling via NGFR and SORCS2 plays a role in synaptic plasticity and long-term depression (LTD). Binding to NGFR and SORCS2 promotes neuronal apoptosis. Promotes neuronal growth cone collapse. The chain is Neurotrophic factor BDNF precursor form (BDNF) from Bos taurus (Bovine).